A 190-amino-acid polypeptide reads, in one-letter code: MNKVDKEKIQHAVREILEAIGEDPDREGLIETPNRVARMYEEIFSGLSEEPRDHLKVLFADEKHEELVLVKDIPFYSCCEHHLVPFFGKAHIAYLPKGGRLTGLSKLARVIDTLAKRPQLQERITKNAADIIMEELQPYGVLVVVEAEHMCMTMRGVKKPGSKTVTSAVRGIFEKDIASRAEAMSLITMK.

Residues Cys-79, His-82, and Cys-151 each contribute to the Zn(2+) site.

The protein belongs to the GTP cyclohydrolase I family. Toroid-shaped homodecamer, composed of two pentamers of five dimers.

It carries out the reaction GTP + H2O = 7,8-dihydroneopterin 3'-triphosphate + formate + H(+). It participates in cofactor biosynthesis; 7,8-dihydroneopterin triphosphate biosynthesis; 7,8-dihydroneopterin triphosphate from GTP: step 1/1. The sequence is that of GTP cyclohydrolase 1 from Clostridioides difficile (strain 630) (Peptoclostridium difficile).